A 549-amino-acid chain; its full sequence is TBC1 domain family member 3B (549 aa).

In terms of domain architecture, Rab-GAP TBC spans Gly-101–Gly-293. S-palmitoyl cysteine attachment occurs at residues Cys-318 and Cys-325. Positions Leu-350–Tyr-426 are disordered. Residues Pro-398–Pro-417 show a composition bias toward low complexity.

Post-translationally, ubiquitinated by a CUL7-based E3 ligase, which leads to proteasomal degradation. In terms of processing, palmitoylation is required for membrane localization and protects TBC1D3 from ubiquitination.

It is found in the cell membrane. Its function is as follows. Acts as a GTPase activating protein for RAB5. Does not act on RAB4 or RAB11. The polypeptide is TBC1 domain family member 3B (TBC1D3B) (Homo sapiens (Human)).